Reading from the N-terminus, the 235-residue chain is 2-C-methyl-D-erythritol 4-phosphate cytidylyltransferase (235 aa).

The protein belongs to the IspD/TarI cytidylyltransferase family. IspD subfamily. Homodimer.

It carries out the reaction 2-C-methyl-D-erythritol 4-phosphate + CTP + H(+) = 4-CDP-2-C-methyl-D-erythritol + diphosphate. The protein operates within isoprenoid biosynthesis; isopentenyl diphosphate biosynthesis via DXP pathway; isopentenyl diphosphate from 1-deoxy-D-xylulose 5-phosphate: step 2/6. Its function is as follows. Catalyzes the formation of 4-diphosphocytidyl-2-C-methyl-D-erythritol from CTP and 2-C-methyl-D-erythritol 4-phosphate (MEP). The protein is 2-C-methyl-D-erythritol 4-phosphate cytidylyltransferase of Serratia proteamaculans (strain 568).